Reading from the N-terminus, the 315-residue chain is Small ribosomal subunit biogenesis GTPase RsgA (315 aa).

In terms of domain architecture, CP-type G spans 79-243 (LSKESHILGA…LIDTPGIKGF (165 aa)). GTP contacts are provided by residues 128–131 (NKID) and 182–190 (GHSGVGKSS). Cysteine 267, cysteine 272, histidine 274, and cysteine 280 together coordinate Zn(2+).

Belongs to the TRAFAC class YlqF/YawG GTPase family. RsgA subfamily. Monomer. Associates with 30S ribosomal subunit, binds 16S rRNA. It depends on Zn(2+) as a cofactor.

The protein localises to the cytoplasm. One of several proteins that assist in the late maturation steps of the functional core of the 30S ribosomal subunit. Helps release RbfA from mature subunits. May play a role in the assembly of ribosomal proteins into the subunit. Circularly permuted GTPase that catalyzes slow GTP hydrolysis, GTPase activity is stimulated by the 30S ribosomal subunit. In Porphyromonas gingivalis (strain ATCC 33277 / DSM 20709 / CIP 103683 / JCM 12257 / NCTC 11834 / 2561), this protein is Small ribosomal subunit biogenesis GTPase RsgA.